Consider the following 110-residue polypeptide: Class I hydrophobin 2 (110 aa).

The signal sequence occupies residues 1-19; it reads MFARAASVFVLSLPILATA. Intrachain disulfides connect Cys29–Cys89, Cys36–Cys83, Cys37–Cys70, and Cys90–Cys103.

This sequence belongs to the fungal hydrophobin family. As to quaternary structure, self-assembles to form functional amyloid fibrils called rodlets. Self-assembly into fibrillar rodlets occurs spontaneously at hydrophobic:hydrophilic interfaces and the rodlets further associate laterally to form amphipathic monolayers.

The protein resides in the secreted. Its subcellular location is the cell wall. Functionally, aerial growth, conidiation, and dispersal of filamentous fungi in the environment rely upon a capability of their secreting small amphipathic proteins called hydrophobins (HPBs) with low sequence identity. Class I can self-assemble into an outermost layer of rodlet bundles on aerial cell surfaces, conferring cellular hydrophobicity that supports fungal growth, development and dispersal; whereas Class II form highly ordered films at water-air interfaces through intermolecular interactions but contribute nothing to the rodlet structure. Pnh2 is a class I hydrophobin that might be involved in the attachment of the hydrophilic wall of hyphae to the hydrophobic surface of wood under inorganic phosphate (Pi)-deficient conditions and enable the mycelium to degrade efficiently the components of wood and to acquire nutrients containing Pi. The polypeptide is Class I hydrophobin 2 (Pholiota nameko).